A 221-amino-acid polypeptide reads, in one-letter code: PKHD-type hydroxylase NATL1_16191 (221 aa).

A Fe2OG dioxygenase domain is found at Leu-80 to Ser-174. Residues His-98, Asp-100, and His-155 each contribute to the Fe cation site. Arg-165 lines the 2-oxoglutarate pocket.

Fe(2+) is required as a cofactor. The cofactor is L-ascorbate.

The chain is PKHD-type hydroxylase NATL1_16191 from Prochlorococcus marinus (strain NATL1A).